Here is a 401-residue protein sequence, read N- to C-terminus: Bone morphogenetic protein 4 (401 aa).

An N-terminal signal peptide occupies residues 1-19 (MIPGNRMLMVILLSQVLLG). Residues 20 to 287 (GTNYASLIPD…GHALTRRSKR (268 aa)) constitute a propeptide that is removed on maturation. N-linked (GlcNAc...) asparagine glycans are attached at residues N141, N204, and N238. The interval 279–299 (HALTRRSKRSPKQQRPRKKNK) is disordered. Residues 280–299 (ALTRRSKRSPKQQRPRKKNK) show a composition bias toward basic residues. Intrachain disulfides connect C301–C366, C330–C398, and C334–C400. N-linked (GlcNAc...) asparagine glycosylation is found at N343 and N358.

The protein belongs to the TGF-beta family. In terms of assembly, homodimer; disulfide-linked. Forms heterodimers with the TGF-beta family member derriere. Part of a complex consisting of twsg1 and chrd. Interacts with tsku.

Its subcellular location is the secreted. The protein localises to the extracellular space. It is found in the extracellular matrix. Posterior-ventralizing factor in Xenopus mesoderm induction. Induces posteroventral mesoderm and counteracts dorsalizing signals such as activin. In Xenopus laevis (African clawed frog), this protein is Bone morphogenetic protein 4 (bmp4).